Here is a 236-residue protein sequence, read N- to C-terminus: Sugar fermentation stimulation protein homolog (236 aa).

This sequence belongs to the SfsA family.

This is Sugar fermentation stimulation protein homolog from Proteus mirabilis (strain HI4320).